The sequence spans 149 residues: UPF0178 protein lwe1471 (149 aa).

This sequence belongs to the UPF0178 family.

The polypeptide is UPF0178 protein lwe1471 (Listeria welshimeri serovar 6b (strain ATCC 35897 / DSM 20650 / CCUG 15529 / CIP 8149 / NCTC 11857 / SLCC 5334 / V8)).